The primary structure comprises 939 residues: Translation initiation factor IF-2 (939 aa).

The disordered stretch occupies residues 57-274; that stretch reads RLKPAAPAAP…APTKKNEQKI (218 aa). Basic and acidic residues-rich tracts occupy residues 83 to 122 and 129 to 138; these read MEPKEEPQKEVKESVKEAPESLPESPKEEAFEAEIPKESV and LEQEPPKEEL. 2 stretches are compositionally biased toward polar residues: residues 146–158 and 170–180; these read ESASETLSDSNPL and VATTLATQTDA. Residues 208–227 show a composition bias toward basic and acidic residues; that stretch reads KRSEEPAPKADRPSLEEART. The segment covering 252–262 has biased composition (basic residues); it reads ARKKKKEKKKP. The tr-type G domain occupies 438 to 607; the sequence is ERPPVVTIMG…LVQSELLELK (170 aa). The interval 447-454 is G1; it reads GHVDHGKT. 447–454 is a binding site for GTP; sequence GHVDHGKT. The tract at residues 472–476 is G2; that stretch reads GITQH. Residues 493-496 are G3; sequence DTPG. Residues 493–497 and 547–550 contribute to the GTP site; these read DTPGH and NKVD. The segment at 547–550 is G4; that stretch reads NKVD. A G5 region spans residues 583 to 585; that stretch reads SAK.

Belongs to the TRAFAC class translation factor GTPase superfamily. Classic translation factor GTPase family. IF-2 subfamily.

Its subcellular location is the cytoplasm. Functionally, one of the essential components for the initiation of protein synthesis. Protects formylmethionyl-tRNA from spontaneous hydrolysis and promotes its binding to the 30S ribosomal subunits. Also involved in the hydrolysis of GTP during the formation of the 70S ribosomal complex. The sequence is that of Translation initiation factor IF-2 from Wolinella succinogenes (strain ATCC 29543 / DSM 1740 / CCUG 13145 / JCM 31913 / LMG 7466 / NCTC 11488 / FDC 602W) (Vibrio succinogenes).